A 482-amino-acid polypeptide reads, in one-letter code: Guanine nucleotide exchange factor SRM1 (482 aa).

The span at 1–11 (MVKRTVATNGD) shows a compositional bias: polar residues. Residues 1–22 (MVKRTVATNGDASGAHRAKKMS) form a disordered region. Positions 15-26 (AHRAKKMSKTHA) match the Nuclear localization signal motif. RCC1 repeat units lie at residues 45-101 (PLDI…ALDE), 103-152 (SNVW…TPAK), 183-238 (NGEV…FLDE), 239-291 (EGMV…ALTK), 292-347 (DNKL…ILSQ), 349-411 (GDLY…AVAQ), and 412-466 (NGIA…SGGV). The tract at residues 128 to 158 (KDMDADDSSDDEDGDLNELESTPAKIPRESF) is disordered. Residues 131–145 (DADDSSDDEDGDLNE) are compositionally biased toward acidic residues. A phosphoserine mark is found at serine 135 and serine 136.

In terms of assembly, component of a multicomponent complex composed of six to seven proteins, which has a collective molecular mass greater than 150 kDa. Interacts with GSP1 and YRB2. In terms of processing, phosphorylated; possibly by KSP1.

It is found in the nucleus. Functionally, guanine nucleotide exchange factor that promotes the exchange of GSP1/GSP2-bound GDP by GTP and controls RNA metabolism and transport. Involved in yeast pheromone response pathway and in mRNA metabolism. Involved in nuclear pore complex (NPC) assembly and required for mRNA and ribosome nuclear export. Binds chromatin and is involved NPC-mediated transcriptional control. In Saccharomyces cerevisiae (strain ATCC 204508 / S288c) (Baker's yeast), this protein is Guanine nucleotide exchange factor SRM1 (SRM1).